The sequence spans 256 residues: Trypsin alpha (256 aa).

Residues 1-22 form the signal peptide; the sequence is MLKIVILLSAVVCALGGTVPEG. Residues 23–30 constitute a propeptide, activation peptide; that stretch reads LLPQLDGR. In terms of domain architecture, Peptidase S1 spans 31 to 254; it reads IVGGSATTIS…LRSWVVSTAN (224 aa). A disulfide bridge links Cys56 with Cys72. Residues His71 and Asp116 each act as charge relay system in the active site. 2 disulfide bridges follow: Cys180–Cys197 and Cys206–Cys230. Ser210 acts as the Charge relay system in catalysis.

It belongs to the peptidase S1 family. In terms of tissue distribution, synthesized in the midgut of both larvae and adults, primarily in the ventriculus and gastric caeca.

The protein localises to the secreted. It is found in the extracellular space. The catalysed reaction is Preferential cleavage: Arg-|-Xaa, Lys-|-Xaa.. The polypeptide is Trypsin alpha (alphaTry) (Drosophila melanogaster (Fruit fly)).